The chain runs to 932 residues: Isoleucine--tRNA ligase (932 aa).

The 'HIGH' region signature appears at 58-68 (PYANGNLHLGH). Glu567 is an L-isoleucyl-5'-AMP binding site. The 'KMSKS' region signature appears at 608-612 (KMSKS). Position 611 (Lys611) interacts with ATP. Positions 895, 898, 915, and 918 each coordinate Zn(2+).

Belongs to the class-I aminoacyl-tRNA synthetase family. IleS type 1 subfamily. In terms of assembly, monomer. Zn(2+) is required as a cofactor.

It localises to the cytoplasm. It carries out the reaction tRNA(Ile) + L-isoleucine + ATP = L-isoleucyl-tRNA(Ile) + AMP + diphosphate. Its function is as follows. Catalyzes the attachment of isoleucine to tRNA(Ile). As IleRS can inadvertently accommodate and process structurally similar amino acids such as valine, to avoid such errors it has two additional distinct tRNA(Ile)-dependent editing activities. One activity is designated as 'pretransfer' editing and involves the hydrolysis of activated Val-AMP. The other activity is designated 'posttransfer' editing and involves deacylation of mischarged Val-tRNA(Ile). This chain is Isoleucine--tRNA ligase, found in Azoarcus sp. (strain BH72).